Reading from the N-terminus, the 300-residue chain is Acetylglutamate kinase (300 aa).

Residues 73–74 (GG), Arg-95, and Asn-197 contribute to the substrate site.

Belongs to the acetylglutamate kinase family. ArgB subfamily.

Its subcellular location is the cytoplasm. The catalysed reaction is N-acetyl-L-glutamate + ATP = N-acetyl-L-glutamyl 5-phosphate + ADP. Its pathway is amino-acid biosynthesis; L-arginine biosynthesis; N(2)-acetyl-L-ornithine from L-glutamate: step 2/4. Catalyzes the ATP-dependent phosphorylation of N-acetyl-L-glutamate. The sequence is that of Acetylglutamate kinase from Bordetella bronchiseptica (strain ATCC BAA-588 / NCTC 13252 / RB50) (Alcaligenes bronchisepticus).